The primary structure comprises 185 residues: Peptide deformylase (185 aa).

Cysteine 94 and histidine 136 together coordinate Fe cation. Glutamate 137 is an active-site residue. Fe cation is bound at residue histidine 140.

It belongs to the polypeptide deformylase family. Fe(2+) is required as a cofactor.

The catalysed reaction is N-terminal N-formyl-L-methionyl-[peptide] + H2O = N-terminal L-methionyl-[peptide] + formate. Removes the formyl group from the N-terminal Met of newly synthesized proteins. Requires at least a dipeptide for an efficient rate of reaction. N-terminal L-methionine is a prerequisite for activity but the enzyme has broad specificity at other positions. The polypeptide is Peptide deformylase (Chlorobium limicola (strain DSM 245 / NBRC 103803 / 6330)).